The sequence spans 63 residues: Large ribosomal subunit protein uL29 (63 aa).

Belongs to the universal ribosomal protein uL29 family.

This Salmonella agona (strain SL483) protein is Large ribosomal subunit protein uL29.